We begin with the raw amino-acid sequence, 67 residues long: DNA-directed RNA polymerase subunit omega (67 aa).

This sequence belongs to the RNA polymerase subunit omega family. In terms of assembly, the RNAP catalytic core consists of 2 alpha, 1 beta, 1 beta' and 1 omega subunit. When a sigma factor is associated with the core the holoenzyme is formed, which can initiate transcription.

The catalysed reaction is RNA(n) + a ribonucleoside 5'-triphosphate = RNA(n+1) + diphosphate. Functionally, promotes RNA polymerase assembly. Latches the N- and C-terminal regions of the beta' subunit thereby facilitating its interaction with the beta and alpha subunits. This Methylibium petroleiphilum (strain ATCC BAA-1232 / LMG 22953 / PM1) protein is DNA-directed RNA polymerase subunit omega.